A 454-amino-acid chain; its full sequence is 5-hydroxytryptamine receptor 3D (454 aa).

Positions 1 to 24 (MQKHSPGPPALALLSQSLLTTGNG) are cleaved as a signal peptide. Topologically, residues 25–232 (DTLIINCPGF…IRRRCRPSPY (208 aa)) are extracellular. Residue Asn-66 is glycosylated (N-linked (GlcNAc...) asparagine). A helical membrane pass occupies residues 233–253 (VVNFLVPSGILIAIDALSFYL). The Cytoplasmic portion of the chain corresponds to 254 to 264 (PLESGNCAPFK). Residues 265-285 (MTVLLGYSVFLLMMNDLLPAT) form a helical membrane-spanning segment. The Extracellular segment spans residues 286–306 (STSSHASLVAPLALMQTPLPA). Residues 307–327 (GVYFALCLSLMVGSLLETIFI) form a helical membrane-spanning segment. Topologically, residues 328–431 (THLLHVATTQ…WVQFSHAMDA (104 aa)) are cytoplasmic. The tract at residues 363-410 (PQKGNKGPGLTPTHLPGVKEPEVSAGQMPGPGEAELTGGSEWTRAQRE) is disordered. An HA-stretch; determines single-channel conductance in 5-HT3 receptors region spans residues 399–430 (TGGSEWTRAQREHEAQKQHSVELWVQFSHAMD). The helical transmembrane segment at 432–452 (LLFRLYLLFMASSIITVICLW) threads the bilayer. Topologically, residues 453–454 (NT) are extracellular.

Belongs to the ligand-gated ion channel (TC 1.A.9) family. 5-hydroxytryptamine receptor (TC 1.A.9.2) subfamily. HTR3D sub-subfamily. Forms homopentameric as well as heteropentameric serotonin-activated cation-selective channel complexes with HTR3A. The homomeric complex is not functional. Heteropentameric complexes display properties which resemble that of neuronal serotonin-activated channels in vivo. Expressed in liver, as well as fetal and adult colon and kidney.

It is found in the postsynaptic cell membrane. Its subcellular location is the cell membrane. It catalyses the reaction Na(+)(in) = Na(+)(out). The enzyme catalyses K(+)(in) = K(+)(out). The catalysed reaction is Ca(2+)(in) = Ca(2+)(out). Forms serotonin (5-hydroxytryptamine/5-HT3)-activated cation-selective channel complexes, which when activated cause fast, depolarizing responses in neurons. The sequence is that of 5-hydroxytryptamine receptor 3D from Homo sapiens (Human).